A 1385-amino-acid polypeptide reads, in one-letter code: Probable serine/threonine-protein kinase DDB_G0268876 (1385 aa).

Positions 758-1008 (LELTKEIGRG…QQIITYLENL (251 aa)) constitute a Protein kinase domain. ATP-binding positions include 764–772 (IGRGVSGVV) and Lys785. The active-site Proton acceptor is the Asp878. 3 disordered regions span residues 1040-1074 (GGNS…ENKI), 1091-1266 (EVSK…SVGG), and 1287-1339 (ISSS…NNNN). Residues 1055 to 1073 (VSGSNNNESSTAVSLNENK) are compositionally biased toward polar residues. Low complexity predominate over residues 1107–1144 (SSSTSSSPSTLSAPQSPVGSTSPMGSTSTSPISNNNNR). Basic and acidic residues predominate over residues 1145–1162 (PTHDHQQPHQVKWERIVP). Low complexity-rich tracts occupy residues 1189-1232 (NNNN…SSGI), 1242-1266 (FLSS…SVGG), and 1295-1339 (NNNN…NNNN).

Belongs to the protein kinase superfamily. TKL Ser/Thr protein kinase family.

The catalysed reaction is L-seryl-[protein] + ATP = O-phospho-L-seryl-[protein] + ADP + H(+). It carries out the reaction L-threonyl-[protein] + ATP = O-phospho-L-threonyl-[protein] + ADP + H(+). This is Probable serine/threonine-protein kinase DDB_G0268876 from Dictyostelium discoideum (Social amoeba).